A 247-amino-acid chain; its full sequence is ATP synthase subunit a, chloroplastic (247 aa).

Helical transmembrane passes span 36–56, 95–115, 134–154, 199–219, and 220–240; these read GQVL…SIAG, IPFL…GALI, INTT…AGFS, LVVG…IMLL, and GLFT…AYIG.

The protein belongs to the ATPase A chain family. In terms of assembly, F-type ATPases have 2 components, CF(1) - the catalytic core - and CF(0) - the membrane proton channel. CF(1) has five subunits: alpha(3), beta(3), gamma(1), delta(1), epsilon(1). CF(0) has four main subunits: a, b, b' and c.

It is found in the plastid. The protein resides in the chloroplast thylakoid membrane. Key component of the proton channel; it plays a direct role in the translocation of protons across the membrane. The chain is ATP synthase subunit a, chloroplastic from Tupiella akineta (Green alga).